The sequence spans 265 residues: Ribosomal RNA small subunit methyltransferase A (265 aa).

Asn-13, Leu-15, Gly-39, Glu-59, Asp-87, and Asn-108 together coordinate S-adenosyl-L-methionine.

It belongs to the class I-like SAM-binding methyltransferase superfamily. rRNA adenine N(6)-methyltransferase family. RsmA subfamily.

Its subcellular location is the cytoplasm. It carries out the reaction adenosine(1518)/adenosine(1519) in 16S rRNA + 4 S-adenosyl-L-methionine = N(6)-dimethyladenosine(1518)/N(6)-dimethyladenosine(1519) in 16S rRNA + 4 S-adenosyl-L-homocysteine + 4 H(+). Specifically dimethylates two adjacent adenosines (A1518 and A1519) in the loop of a conserved hairpin near the 3'-end of 16S rRNA in the 30S particle. May play a critical role in biogenesis of 30S subunits. This Aliarcobacter butzleri (strain RM4018) (Arcobacter butzleri) protein is Ribosomal RNA small subunit methyltransferase A.